We begin with the raw amino-acid sequence, 126 residues long: Holo-[acyl-carrier-protein] synthase (126 aa).

D9 and E58 together coordinate Mg(2+).

This sequence belongs to the P-Pant transferase superfamily. AcpS family. Mg(2+) is required as a cofactor.

It localises to the cytoplasm. The catalysed reaction is apo-[ACP] + CoA = holo-[ACP] + adenosine 3',5'-bisphosphate + H(+). In terms of biological role, transfers the 4'-phosphopantetheine moiety from coenzyme A to a Ser of acyl-carrier-protein. The sequence is that of Holo-[acyl-carrier-protein] synthase from Klebsiella pneumoniae subsp. pneumoniae (strain ATCC 700721 / MGH 78578).